A 216-amino-acid chain; its full sequence is Capsule polysaccharide export ATP-binding protein CtrD (216 aa).

Positions 2 to 215 (ISVEHVSKRY…DKAYEYYNSL (214 aa)) constitute an ABC transporter domain. 38–45 (GRNGAGKS) is a binding site for ATP.

The protein belongs to the ABC transporter superfamily.

The protein localises to the cell inner membrane. It catalyses the reaction ATP + H2O + capsular polysaccharide-[capsular polysaccharide-binding protein]Side 1 = ADP + phosphate + capsular polysaccharideSide 2 + [capsular polysaccharide-binding protein]Side 1.. Its function is as follows. Putative ATP-binding protein, and an energy-coupling component of capsule polysaccharide export apparatus. This is Capsule polysaccharide export ATP-binding protein CtrD (ctrD) from Neisseria meningitidis serogroup B (strain ATCC BAA-335 / MC58).